The following is a 361-amino-acid chain: Phospho-N-acetylmuramoyl-pentapeptide-transferase (361 aa).

A run of 10 helical transmembrane segments spans residues 25–45 (RAVL…PAVI), 73–93 (TMGG…WADL), 97–117 (YVWL…VDDW), 134–154 (YFWQ…TASL), 168–188 (ATFG…IVGA), 200–220 (GLAI…AYVA), 237–257 (AGEL…FLWF), 264–284 (VFMG…VAVV), 289–309 (IILF…MIQV), and 338–358 (QVVV…LSSL).

This sequence belongs to the glycosyltransferase 4 family. MraY subfamily. Requires Mg(2+) as cofactor.

It localises to the cell inner membrane. The enzyme catalyses UDP-N-acetyl-alpha-D-muramoyl-L-alanyl-gamma-D-glutamyl-meso-2,6-diaminopimeloyl-D-alanyl-D-alanine + di-trans,octa-cis-undecaprenyl phosphate = di-trans,octa-cis-undecaprenyl diphospho-N-acetyl-alpha-D-muramoyl-L-alanyl-D-glutamyl-meso-2,6-diaminopimeloyl-D-alanyl-D-alanine + UMP. It participates in cell wall biogenesis; peptidoglycan biosynthesis. Functionally, catalyzes the initial step of the lipid cycle reactions in the biosynthesis of the cell wall peptidoglycan: transfers peptidoglycan precursor phospho-MurNAc-pentapeptide from UDP-MurNAc-pentapeptide onto the lipid carrier undecaprenyl phosphate, yielding undecaprenyl-pyrophosphoryl-MurNAc-pentapeptide, known as lipid I. The polypeptide is Phospho-N-acetylmuramoyl-pentapeptide-transferase (Thiobacillus denitrificans (strain ATCC 25259 / T1)).